The following is a 577-amino-acid chain: Arginine--tRNA ligase (577 aa).

Positions 124 to 132 (VAKEMHVGH) match the 'HIGH' region motif.

It belongs to the class-I aminoacyl-tRNA synthetase family. Monomer.

Its subcellular location is the cytoplasm. The catalysed reaction is tRNA(Arg) + L-arginine + ATP = L-arginyl-tRNA(Arg) + AMP + diphosphate. The polypeptide is Arginine--tRNA ligase (Salmonella typhi).